We begin with the raw amino-acid sequence, 510 residues long: Anaerobic nitric oxide reductase transcription regulator NorR (510 aa).

In terms of domain architecture, Sigma-54 factor interaction spans 188–417 (IIGNSQGMRT…LEHVIKRAAV (230 aa)). Residues 216–223 (GETGVGKE) and 279–288 (ADGGTLFLDE) contribute to the ATP site. The segment at residues 486-505 (WAATARQLELDSGNLHRLAK) is a DNA-binding region (H-T-H motif).

The protein operates within nitrogen metabolism; nitric oxide reduction. Functionally, required for the expression of anaerobic nitric oxide (NO) reductase, acts as a transcriptional activator for at least the norVW operon. Activation also requires sigma-54. This chain is Anaerobic nitric oxide reductase transcription regulator NorR, found in Vibrio vulnificus (strain CMCP6).